The primary structure comprises 241 residues: Uridylate kinase (241 aa).

ATP-binding positions include 10–13 (KLSG), Gly-53, and Arg-57. UMP-binding positions include Asp-72 and 133–140 (AGSPYFST). Positions 161, 167, and 170 each coordinate ATP.

This sequence belongs to the UMP kinase family. As to quaternary structure, homohexamer.

It is found in the cytoplasm. The enzyme catalyses UMP + ATP = UDP + ADP. The protein operates within pyrimidine metabolism; CTP biosynthesis via de novo pathway; UDP from UMP (UMPK route): step 1/1. With respect to regulation, inhibited by UTP. Catalyzes the reversible phosphorylation of UMP to UDP. This is Uridylate kinase from Aster yellows witches'-broom phytoplasma (strain AYWB).